We begin with the raw amino-acid sequence, 471 residues long: Apyrase 1 (471 aa).

At 1 to 21 the chain is on the cytoplasmic side; it reads MTAKRAIGRHESLADKVHRHR. A helical; Signal-anchor for type II membrane protein transmembrane segment spans residues 22 to 42; sequence GLLLVISIPIVLIALVLLLMP. The Lumenal segment spans residues 43–471; the sequence is GTSTSVSVIE…GSAIEAVSSP (429 aa). 72 to 82 lines the ATP pocket; the sequence is VIFDAGSSGSR. The Proton acceptor role is filled by Glu-194. 218-228 serves as a coordination point for ATP; that stretch reads GVVDLGGGSVQ. Residue Asn-333 is glycosylated (N-linked (GlcNAc...) asparagine).

The protein belongs to the GDA1/CD39 NTPase family. Requires Ca(2+) as cofactor. Expressed in roots, root hairs, root cap, leaves, stems, trichomes, phloem throughout the plant, guard cells, filaments of young stamens, stipules, papillae of stigmas, pollen, pollen tubes and the abscission zone of siliques.

Its subcellular location is the golgi apparatus membrane. It localises to the membrane. It carries out the reaction a ribonucleoside 5'-triphosphate + 2 H2O = a ribonucleoside 5'-phosphate + 2 phosphate + 2 H(+). Functionally, catalyzes the hydrolysis of phosphoanhydride bonds of nucleoside tri- and di-phosphates. Substrate preference is ATP &gt; ADP. Functions with APY2 to reduce extracellular ATP level which is essential for pollen germination and normal plant development. Plays a role in the regulation of stomatal function by modulating extracellular ATP levels in guard cells. The chain is Apyrase 1 (APY1) from Arabidopsis thaliana (Mouse-ear cress).